Reading from the N-terminus, the 518-residue chain is Integrator complex subunit 14 (518 aa).

The region spanning proline 2–leucine 204 is the VWFA domain. Mg(2+) is bound by residues serine 10, serine 12, and threonine 86.

Belongs to the Integrator subunit 14 family. Component of the Integrator complex, composed of core subunits INTS1, INTS2, INTS3, INTS4, INTS5, INTS6, INTS7, INTS8, INTS9/RC74, INTS10, INTS11/CPSF3L, INTS12, INTS13, INTS14 and INTS15. The core complex associates with protein phosphatase 2A subunits PPP2CA and PPP2R1A, to form the Integrator-PP2A (INTAC) complex. INTS14 is part of the tail subcomplex, composed of INTS10, INTS13, INTS14 and INTS15.

The protein localises to the nucleus. Functionally, component of the integrator complex, a multiprotein complex that terminates RNA polymerase II (Pol II) transcription in the promoter-proximal region of genes. The integrator complex provides a quality checkpoint during transcription elongation by driving premature transcription termination of transcripts that are unfavorably configured for transcriptional elongation: the complex terminates transcription by (1) catalyzing dephosphorylation of the C-terminal domain (CTD) of Pol II subunit POLR2A/RPB1 and SUPT5H/SPT5, (2) degrading the exiting nascent RNA transcript via endonuclease activity and (3) promoting the release of Pol II from bound DNA. The integrator complex is also involved in terminating the synthesis of non-coding Pol II transcripts, such as enhancer RNAs (eRNAs), small nuclear RNAs (snRNAs), telomerase RNAs and long non-coding RNAs (lncRNAs). Within the integrator complex, INTS14 is part of the integrator tail module that acts as a platform for the recruitment of transcription factors at promoters. The chain is Integrator complex subunit 14 from Xenopus tropicalis (Western clawed frog).